The sequence spans 221 residues: Iron-sulfur cluster repair protein YtfE (221 aa).

The protein belongs to the RIC family. YtfE subfamily. Homodimer.

The protein resides in the cytoplasm. In terms of biological role, di-iron-containing protein involved in the repair of iron-sulfur clusters damaged by oxidative and nitrosative stress conditions. In Pectobacterium carotovorum subsp. carotovorum (strain PC1), this protein is Iron-sulfur cluster repair protein YtfE.